The primary structure comprises 285 residues: Bifunctional protein FolD (285 aa).

Residues 165-167, T192, and V233 contribute to the NADP(+) site; that span reads GRG.

Belongs to the tetrahydrofolate dehydrogenase/cyclohydrolase family. Homodimer.

The enzyme catalyses (6R)-5,10-methylene-5,6,7,8-tetrahydrofolate + NADP(+) = (6R)-5,10-methenyltetrahydrofolate + NADPH. The catalysed reaction is (6R)-5,10-methenyltetrahydrofolate + H2O = (6R)-10-formyltetrahydrofolate + H(+). The protein operates within one-carbon metabolism; tetrahydrofolate interconversion. In terms of biological role, catalyzes the oxidation of 5,10-methylenetetrahydrofolate to 5,10-methenyltetrahydrofolate and then the hydrolysis of 5,10-methenyltetrahydrofolate to 10-formyltetrahydrofolate. The chain is Bifunctional protein FolD from Corynebacterium jeikeium (strain K411).